The following is a 268-amino-acid chain: UPF0328 protein ECU09_2030 (268 aa).

It belongs to the UPF0328 family.

The protein is UPF0328 protein ECU09_2030 of Encephalitozoon cuniculi (strain GB-M1) (Microsporidian parasite).